Consider the following 258-residue polypeptide: Imidazole glycerol phosphate synthase subunit HisF (258 aa).

Active-site residues include Asp11 and Asp130.

Belongs to the HisA/HisF family. Heterodimer of HisH and HisF.

The protein resides in the cytoplasm. It carries out the reaction 5-[(5-phospho-1-deoxy-D-ribulos-1-ylimino)methylamino]-1-(5-phospho-beta-D-ribosyl)imidazole-4-carboxamide + L-glutamine = D-erythro-1-(imidazol-4-yl)glycerol 3-phosphate + 5-amino-1-(5-phospho-beta-D-ribosyl)imidazole-4-carboxamide + L-glutamate + H(+). It participates in amino-acid biosynthesis; L-histidine biosynthesis; L-histidine from 5-phospho-alpha-D-ribose 1-diphosphate: step 5/9. In terms of biological role, IGPS catalyzes the conversion of PRFAR and glutamine to IGP, AICAR and glutamate. The HisF subunit catalyzes the cyclization activity that produces IGP and AICAR from PRFAR using the ammonia provided by the HisH subunit. The polypeptide is Imidazole glycerol phosphate synthase subunit HisF (Escherichia coli (strain ATCC 8739 / DSM 1576 / NBRC 3972 / NCIMB 8545 / WDCM 00012 / Crooks)).